Here is a 306-residue protein sequence, read N- to C-terminus: Small ribosomal subunit protein uS2 (306 aa).

A compositionally biased stretch (basic and acidic residues) spans 229 to 238 (GEESAAEERP). The interval 229-306 (GEESAAEERP…VGEGDESEER (78 aa)) is disordered. Over residues 261 to 287 (QPGEPEAEAFEEAAGEPEDSTEEEAAE) the composition is skewed to acidic residues.

This sequence belongs to the universal ribosomal protein uS2 family.

This chain is Small ribosomal subunit protein uS2, found in Rubrobacter xylanophilus (strain DSM 9941 / JCM 11954 / NBRC 16129 / PRD-1).